The chain runs to 253 residues: Complement C1q subcomponent subunit B (253 aa).

The first 25 residues, 1 to 25, serve as a signal peptide directing secretion; sequence MKTQWSEILTPLLLLLLGLLHVSWA. Glutamine 26 is subject to Pyrrolidone carboxylic acid. Residues 29-112 form the Collagen-like domain; it reads CTGSPGIPGV…GPRGPKGGSG (84 aa). The tract at residues 29 to 114 is disordered; the sequence is CTGSPGIPGV…RGPKGGSGDY (86 aa). A 4-hydroxyproline mark is found at proline 33, proline 36, proline 39, proline 51, and proline 54. 5-hydroxylysine occurs at positions 57 and 60. Proline 63 bears the 4-hydroxyproline mark. The segment covering 68–77 has biased composition (basic and acidic residues); the sequence is DHGELGEKGD. At lysine 75 the chain carries 5-hydroxylysine. Positions 78–96 are enriched in low complexity; sequence AGIPGIPGKVGPKGPVGPK. Residues proline 81 and proline 84 each carry the 4-hydroxyproline modification. 5-hydroxylysine is present on residues lysine 90 and lysine 96. Residues proline 99 and proline 102 each carry the 4-hydroxyproline modification. Lysine 108 bears the 5-hydroxylysine mark. Residues 115–253 form the C1q domain; sequence KATQKVAFSA…GFLLFPDMDV (139 aa). Cysteine 179 and cysteine 198 form a disulfide bridge. Ca(2+) contacts are provided by aspartate 199, tyrosine 200, and glutamine 206.

In terms of assembly, core component of the complement C1 complex, a calcium-dependent complex composed of 1 molecule of the C1Q subcomplex, 2 molecules of C1R and 2 molecules of C1S. The C1Q subcomplex is composed 18 subunits: 3 chains of C1QA, C1QB, and C1QC trimerize to form 6 collagen-like triple helices connected to six globular ligand-recognition modules (C1q domain). Hydroxylated on lysine and proline residues. Hydroxylated lysine residues can be glycosylated. Human C1Q contains up to 68.3 hydroxylysine-galactosylglucose residues and up to 2.5 hydroxylysine-galactose per molecule. Total percentage hydroxylysine residues glycosylated is 86.4%. In terms of tissue distribution, highest levels in spleen, lung and brain. Weaker expression in kidney and liver. In the spleen, localized mainly to the red pulp, in cells mainly of monocyte-macrophage lineage. In white pulp, localized in specific dendritic cells such as those from the periarteriolar lymphatic sheath (PALS).

Its subcellular location is the secreted. It is found in the cell surface. Its activity is regulated as follows. The C1Q subcomplex is inhibited by sulfated molecules, such as triterpenoid sulfates, heparan sulfate, or chondroitin sulfates. Functionally, core component of the complement C1 complex, a multiprotein complex that initiates the classical pathway of the complement system, a cascade of proteins that leads to phagocytosis and breakdown of pathogens and signaling that strengthens the adaptive immune system. The classical complement pathway is initiated by the C1Q subcomplex of the C1 complex, which specifically binds IgG or IgM immunoglobulins complexed with antigens, forming antigen-antibody complexes on the surface of pathogens: C1QA, together with C1QB and C1QC, specifically recognizes and binds the Fc regions of IgG or IgM via its C1q domain. Immunoglobulin-binding activates the proenzyme C1R, which cleaves C1S, initiating the proteolytic cascade of the complement system. The C1Q subcomplex is activated by a hexamer of IgG complexed with antigens, while it is activated by a pentameric IgM. The C1Q subcomplex also recognizes and binds phosphatidylserine exposed on the surface of cells undergoing programmed cell death, possibly promoting activation of the complement system. In Rattus norvegicus (Rat), this protein is Complement C1q subcomponent subunit B.